Reading from the N-terminus, the 367-residue chain is Phosphoribosylaminoimidazole-succinocarboxamide synthase (367 aa).

Belongs to the SAICAR synthetase family.

The enzyme catalyses 5-amino-1-(5-phospho-D-ribosyl)imidazole-4-carboxylate + L-aspartate + ATP = (2S)-2-[5-amino-1-(5-phospho-beta-D-ribosyl)imidazole-4-carboxamido]succinate + ADP + phosphate + 2 H(+). It functions in the pathway purine metabolism; IMP biosynthesis via de novo pathway; 5-amino-1-(5-phospho-D-ribosyl)imidazole-4-carboxamide from 5-amino-1-(5-phospho-D-ribosyl)imidazole-4-carboxylate: step 1/2. This Vibrio campbellii (strain ATCC BAA-1116) protein is Phosphoribosylaminoimidazole-succinocarboxamide synthase.